We begin with the raw amino-acid sequence, 153 residues long: Ribosome maturation factor RimP (153 aa).

Belongs to the RimP family.

The protein localises to the cytoplasm. Required for maturation of 30S ribosomal subunits. This chain is Ribosome maturation factor RimP, found in Nostoc sp. (strain PCC 7120 / SAG 25.82 / UTEX 2576).